A 242-amino-acid polypeptide reads, in one-letter code: Probable transcriptional regulatory protein XCC3027 (242 aa).

This sequence belongs to the TACO1 family.

The protein localises to the cytoplasm. The polypeptide is Probable transcriptional regulatory protein XCC3027 (Xanthomonas campestris pv. campestris (strain ATCC 33913 / DSM 3586 / NCPPB 528 / LMG 568 / P 25)).